Consider the following 134-residue polypeptide: T-cell receptor beta chain V region CTL-F3 (134 aa).

The first 19 residues, 1–19 (MAPRLLFCLVLCFLRAEPT), serve as a signal peptide directing secretion. The v segment stretch occupies residues 20-115 (NAGVIQTPRH…SAVYLCASSL (96 aa)). An intrachain disulfide couples Cys42 to Cys111. Asn90 is a glycosylation site (N-linked (GlcNAc...) asparagine). A d segment region spans residues 116–119 (STGV). The j segment stretch occupies residues 120 to 134 (SYEQYFGPGTRLTVL).

This chain is T-cell receptor beta chain V region CTL-F3, found in Mus musculus (Mouse).